The sequence spans 269 residues: MLKKSDNKMTDQAYWCVVSGSDIWVNDDQFPFGSAEELGLSVEHAICIGQHQGRKVYWLNDCDVEIELSMVSLRDLLHWPESSFLIASKAIQYGHMTQSMRFCPQCGGRNHLNHNQVAMQCGDCRTLHYPRIFPCIIVAVRNDNKILLAQHPRHKTGMYTVIAGFLEVGETLEQCVAREVKEETGIDVSNIRYFGSQPWAFPSSMMMAFLADYAGGTLKPDYSELSDAQWFDVTSLPDVAPVGTIARQLIENTVDDIRKASVAEQELEH.

Residue arginine 74 participates in substrate binding. Residues cysteine 103, cysteine 106, cysteine 121, and cysteine 124 each contribute to the Zn(2+) site. Tyrosine 129 lines the substrate pocket. The Nudix hydrolase domain occupies 130–253 (PRIFPCIIVA…TIARQLIENT (124 aa)). Alanine 163, glutamate 179, and glutamate 183 together coordinate a divalent metal cation. A Nudix box motif is present at residues 164–185 (GFLEVGETLEQCVAREVKEETG). 197 to 204 (QPWAFPSS) serves as a coordination point for substrate. Glutamate 224 is an a divalent metal cation binding site. Alanine 246 contacts substrate.

Belongs to the Nudix hydrolase family. NudC subfamily. As to quaternary structure, homodimer. Mg(2+) serves as cofactor. The cofactor is Mn(2+). It depends on Zn(2+) as a cofactor.

The catalysed reaction is a 5'-end NAD(+)-phospho-ribonucleoside in mRNA + H2O = a 5'-end phospho-adenosine-phospho-ribonucleoside in mRNA + beta-nicotinamide D-ribonucleotide + 2 H(+). It carries out the reaction NAD(+) + H2O = beta-nicotinamide D-ribonucleotide + AMP + 2 H(+). The enzyme catalyses NADH + H2O = reduced beta-nicotinamide D-ribonucleotide + AMP + 2 H(+). Functionally, mRNA decapping enzyme that specifically removes the nicotinamide adenine dinucleotide (NAD) cap from a subset of mRNAs by hydrolyzing the diphosphate linkage to produce nicotinamide mononucleotide (NMN) and 5' monophosphate mRNA. The NAD-cap is present at the 5'-end of some mRNAs and stabilizes RNA against 5'-processing. Has preference for mRNAs with a 5'-end purine. Catalyzes the hydrolysis of a broad range of dinucleotide pyrophosphates. The sequence is that of NAD-capped RNA hydrolase NudC from Vibrio atlanticus (strain LGP32) (Vibrio splendidus (strain Mel32)).